Here is a 107-residue protein sequence, read N- to C-terminus: Probable antitoxin TacA (107 aa).

This sequence belongs to the TacA antitoxin family. In terms of assembly, forms a complex with cognate antitoxin TacT.

Functionally, probable antitoxin component of a type II toxin-antitoxin (TA) system. Should neutralize cognate toxin TacT (y4aS). The protein is Probable antitoxin TacA of Sinorhizobium fredii (strain NBRC 101917 / NGR234).